Reading from the N-terminus, the 433-residue chain is Enolase (433 aa).

Position 167 (glutamine 167) interacts with (2R)-2-phosphoglycerate. Glutamate 209 functions as the Proton donor in the catalytic mechanism. Residues aspartate 246, glutamate 291, and aspartate 318 each contribute to the Mg(2+) site. (2R)-2-phosphoglycerate contacts are provided by lysine 343, arginine 372, serine 373, and lysine 394. Catalysis depends on lysine 343, which acts as the Proton acceptor.

The protein belongs to the enolase family. As to quaternary structure, component of the RNA degradosome, a multiprotein complex involved in RNA processing and mRNA degradation. Mg(2+) is required as a cofactor.

The protein resides in the cytoplasm. The protein localises to the secreted. It localises to the cell surface. It catalyses the reaction (2R)-2-phosphoglycerate = phosphoenolpyruvate + H2O. Its pathway is carbohydrate degradation; glycolysis; pyruvate from D-glyceraldehyde 3-phosphate: step 4/5. Its function is as follows. Catalyzes the reversible conversion of 2-phosphoglycerate (2-PG) into phosphoenolpyruvate (PEP). It is essential for the degradation of carbohydrates via glycolysis. The protein is Enolase of Haemophilus ducreyi (strain 35000HP / ATCC 700724).